Here is a 395-residue protein sequence, read N- to C-terminus: S-adenosylmethionine synthase (395 aa).

Position 12 (histidine 12) interacts with ATP. Aspartate 14 is a binding site for Mg(2+). Glutamate 40 contacts K(+). Glutamate 53 and glutamine 96 together coordinate L-methionine. The segment at glutamine 96–phenylalanine 106 is flexible loop. Residues aspartate 174 to lysine 176, arginine 242 to phenylalanine 243, aspartate 251, arginine 257 to lysine 258, alanine 274, and lysine 278 each bind ATP. Residue aspartate 251 participates in L-methionine binding. Lysine 282 is a binding site for L-methionine.

It belongs to the AdoMet synthase family. In terms of assembly, homotetramer; dimer of dimers. The cofactor is Mg(2+). It depends on K(+) as a cofactor.

Its subcellular location is the cytoplasm. It carries out the reaction L-methionine + ATP + H2O = S-adenosyl-L-methionine + phosphate + diphosphate. The protein operates within amino-acid biosynthesis; S-adenosyl-L-methionine biosynthesis; S-adenosyl-L-methionine from L-methionine: step 1/1. Catalyzes the formation of S-adenosylmethionine (AdoMet) from methionine and ATP. The overall synthetic reaction is composed of two sequential steps, AdoMet formation and the subsequent tripolyphosphate hydrolysis which occurs prior to release of AdoMet from the enzyme. The polypeptide is S-adenosylmethionine synthase (Tropheryma whipplei (strain Twist) (Whipple's bacillus)).